A 1205-amino-acid chain; its full sequence is U2 snRNP component prp10 (1205 aa).

Disordered regions lie at residues 39-58 (QKEA…EGTQ), 122-175 (YADE…GRSY), and 202-254 (GTLK…RRSR). Positions 44 to 58 (KNSSTNGSVNIEGTQ) are enriched in polar residues. Residues 130–153 (MQERQSKKQIQDRESDYQKQRYDR) show a composition bias toward basic and acidic residues. HEAT repeat units follow at residues 393–429 (LRER…DFGA), 431–473 (ALFN…PFTH), 475–505 (ILVV…AKAS), 506–540 (GLAH…ASAL), 541–578 (GVPA…LLGC), 582–619 (PHLK…AATP), 665–702 (HFTR…TDGV), 745–782 (VGSR…SLGV), 828–865 (PYLP…VLKA), 912–949 (PPIR…RGSE), 954–991 (REWM…AIGP), 993–1024 (DVLA…AETC), 1025–1061 (MPFT…YIGE), 1065–1102 (DYVY…GCVG), 1107–1142 (DAMI…RNCI), and 1143–1179 (GVGP…QSAD).

Belongs to the SF3B1 family. In terms of assembly, belongs to the 40S cdc5-associated complex (or cwf complex), a spliceosome sub-complex reminiscent of a late-stage spliceosome composed of the U2, U5 and U6 snRNAs and at least brr2, cdc5, cwf2/prp3, cwf3/syf1, cwf4/syf3, cwf5/ecm2, spp42/cwf6, cwf7/spf27, cwf8, cwf9, cwf10, cwf11, cwf12, prp45/cwf13, cwf14, cwf15, cwf16, cwf17, cwf18, cwf19, cwf20, cwf21, cwf22, cwf23, cwf24, cwf25, cwf26, cyp7/cwf27, cwf28, cwf29/ist3, lea1, msl1, prp5/cwf1, prp10, prp12/sap130, prp17, prp22, sap61, sap62, sap114, sap145, slu7, smb1, smd1, smd3, smf1, smg1 and syf2.

It is found in the nucleus. Its function is as follows. Contacts pre-mRNA on both sides of the branch site early in spliceosome assembly. The chain is U2 snRNP component prp10 (prp10) from Schizosaccharomyces pombe (strain 972 / ATCC 24843) (Fission yeast).